Consider the following 464-residue polypeptide: Protein FAM90A23 (464 aa).

3 disordered regions span residues 1–42, 69–389, and 415–437; these read MMAR…DPRL, VPAT…HDGA, and HSPE…SEAP. Basic and acidic residues-rich tracts occupy residues 74–89 and 97–114; these read GKKE…KPRA and NKDK…DPQR. Over residues 180–197 the composition is skewed to low complexity; the sequence is LASLSPLRKASLSSSSSL.

The protein belongs to the FAM90 family.

In Homo sapiens (Human), this protein is Protein FAM90A23.